We begin with the raw amino-acid sequence, 509 residues long: Lanosterol 14-alpha demethylase (509 aa).

A helical transmembrane segment spans residues 30-50; it reads GNLLSMLLIACAFTLSLVYLF. Cys-455 is a heme binding site.

The protein belongs to the cytochrome P450 family. Heme serves as cofactor. In terms of processing, ubiquitinated by MARCHF6, leading to proteasomal degradation.

It localises to the endoplasmic reticulum membrane. The protein resides in the microsome membrane. It carries out the reaction a 14alpha-methyl steroid + 3 reduced [NADPH--hemoprotein reductase] + 3 O2 = a Delta(14) steroid + formate + 3 oxidized [NADPH--hemoprotein reductase] + 4 H2O + 4 H(+). It catalyses the reaction lanosterol + 3 reduced [NADPH--hemoprotein reductase] + 3 O2 = 4,4-dimethyl-5alpha-cholesta-8,14,24-trien-3beta-ol + formate + 3 oxidized [NADPH--hemoprotein reductase] + 4 H2O + 4 H(+). The enzyme catalyses 24,25-dihydrolanosterol + 3 reduced [NADPH--hemoprotein reductase] + 3 O2 = 4,4-dimethyl-8,14-cholestadien-3beta-ol + formate + 3 oxidized [NADPH--hemoprotein reductase] + 4 H2O + 4 H(+). The catalysed reaction is a 14alpha-methyl steroid + reduced [NADPH--hemoprotein reductase] + O2 = a 14alpha-hydroxymethyl steroid + oxidized [NADPH--hemoprotein reductase] + H2O + H(+). It carries out the reaction a 14alpha-hydroxymethyl steroid + reduced [NADPH--hemoprotein reductase] + O2 = a 14alpha-formyl steroid + oxidized [NADPH--hemoprotein reductase] + 2 H2O + H(+). It catalyses the reaction a 14alpha-formyl steroid + reduced [NADPH--hemoprotein reductase] + O2 = a Delta(14) steroid + formate + oxidized [NADPH--hemoprotein reductase] + H2O + 2 H(+). The enzyme catalyses lanosterol + reduced [NADPH--hemoprotein reductase] + O2 = 32-hydroxylanosterol + oxidized [NADPH--hemoprotein reductase] + H2O + H(+). The catalysed reaction is 32-hydroxylanosterol + reduced [NADPH--hemoprotein reductase] + O2 = 32-oxolanosterol + oxidized [NADPH--hemoprotein reductase] + 2 H2O + H(+). It carries out the reaction 32-oxolanosterol + reduced [NADPH--hemoprotein reductase] + O2 = 4,4-dimethyl-5alpha-cholesta-8,14,24-trien-3beta-ol + formate + oxidized [NADPH--hemoprotein reductase] + H2O + 2 H(+). It catalyses the reaction 24,25-dihydrolanosterol + reduced [NADPH--hemoprotein reductase] + O2 = 32-hydroxy-24,25-dihydrolanosterol + oxidized [NADPH--hemoprotein reductase] + H2O + H(+). The enzyme catalyses 32-hydroxy-24,25-dihydrolanosterol + reduced [NADPH--hemoprotein reductase] + O2 = 32-oxo-24,25-dihydrolanosterol + oxidized [NADPH--hemoprotein reductase] + 2 H2O + H(+). The catalysed reaction is 32-oxo-24,25-dihydrolanosterol + reduced [NADPH--hemoprotein reductase] + O2 = 4,4-dimethyl-8,14-cholestadien-3beta-ol + formate + oxidized [NADPH--hemoprotein reductase] + H2O + 2 H(+). The protein operates within steroid biosynthesis; zymosterol biosynthesis; zymosterol from lanosterol: step 1/6. Its activity is regulated as follows. Inhibited by azalanstat. Inhibited by azole antifungal agents ketoconazole, itraconazole and fluconazole. Its function is as follows. Sterol 14alpha-demethylase that plays a critical role in the cholesterol biosynthesis pathway, being cholesterol the major sterol component in mammalian membranes as well as a precursor for bile acid and steroid hormone synthesis. Cytochrome P450 monooxygenase that catalyzes the three-step oxidative removal of the 14alpha-methyl group (C-32) of sterols such as lanosterol (lanosta-8,24-dien-3beta-ol) and 24,25-dihydrolanosterol (DHL) in the form of formate, and converts the sterols to 4,4-dimethyl-5alpha-cholesta-8,14,24-trien-3beta-ol and 4,4-dimethyl-8,14-cholestadien-3beta-ol, respectively, which are intermediates of cholesterol biosynthesis. Can also demethylate substrates not intrinsic to mammals, such as eburicol (24-methylene-24,25-dihydrolanosterol), but at a lower rate than DHL. This chain is Lanosterol 14-alpha demethylase, found in Pongo abelii (Sumatran orangutan).